The primary structure comprises 179 residues: Large ribosomal subunit protein uL5 (179 aa).

It belongs to the universal ribosomal protein uL5 family. In terms of assembly, part of the 50S ribosomal subunit; part of the 5S rRNA/L5/L18/L25 subcomplex. Contacts the 5S rRNA and the P site tRNA. Forms a bridge to the 30S subunit in the 70S ribosome.

Its function is as follows. This is one of the proteins that bind and probably mediate the attachment of the 5S RNA into the large ribosomal subunit, where it forms part of the central protuberance. In the 70S ribosome it contacts protein S13 of the 30S subunit (bridge B1b), connecting the 2 subunits; this bridge is implicated in subunit movement. Contacts the P site tRNA; the 5S rRNA and some of its associated proteins might help stabilize positioning of ribosome-bound tRNAs. This is Large ribosomal subunit protein uL5 from Methylococcus capsulatus (strain ATCC 33009 / NCIMB 11132 / Bath).